We begin with the raw amino-acid sequence, 672 residues long: GPI mannosyltransferase pigv-1 (672 aa).

The Cytoplasmic segment spans residues 1-134; it reads MRRREPGRDV…TQRCLGFCFR (134 aa). Basic and acidic residues predominate over residues 82–94; sequence REESDSSSSREDS. Residues 82 to 115 are disordered; sequence REESDSSSSREDSPLGSTETGESCSTTDDEESKE. The segment covering 97–107 has biased composition (low complexity); it reads GSTETGESCST. A helical membrane pass occupies residues 135–155; sequence QLFFSRMWVFILQFIASYYAG. The Extracellular segment spans residues 156–239; that stretch reads DRFRTDGFNL…NGMESVFGWT (84 aa). A helical transmembrane segment spans residues 240-260; that stretch reads FPPWVTITLAAVFVNLFCFLL. The Cytoplasmic segment spans residues 261–277; sequence CGMTLYQVVLIMTRSVK. A run of 2 helical transmembrane segments spans residues 278–298 and 299–319; these read ISLL…FSSA and YSES…LFGL. Topologically, residues 320 to 345 are extracellular; sequence RGKGFWHRMLKGFTGTICFGLTFAVR. The chain crosses the membrane as a helical span at residues 346-366; that stretch reads SNGLLNFLYVAWIWCGTLLWD. The Cytoplasmic segment spans residues 367 to 423; that stretch reads EEMPIPDCHKLISTLAATKNERYKQEWQAKFWRFQQKRKQNRKVFRWTDPNFSRCVT. A helical membrane pass occupies residues 424–444; it reads LFIVIVCAISATLLFFTPYVF. Residues 445–520 are Extracellular-facing; sequence MTNFTADEFC…WSVKFFGYWK (76 aa). Residues 521-541 traverse the membrane as a helical segment; it reads IKKIPCFLMMLPAAILTVLAI. Residues 542-569 are Cytoplasmic-facing; that stretch reads KSSWNDVFLNKRWNNIWVLTARSDHSLP. The chain crosses the membrane as a helical span at residues 570-590; sequence MAIHSSVLLFVAIFYINSEVF. The Extracellular portion of the chain corresponds to 591–592; it reads TR. A helical transmembrane segment spans residues 593–613; the sequence is IIFSSSPFIYIYIATYIDKLT. Residues 614–648 are Cytoplasmic-facing; sequence QGTIAGNRLWQYFESPGILPFFVFRRVWQDGWRGK. The helical transmembrane segment at 649–669 threads the bilayer; sequence LLYIYILGYFVFGTMAHSAWL. At 670–672 the chain is on the extracellular side; that stretch reads PFT.

It belongs to the PIGV family. As to expression, expressed in epithelial tissues including the epidermis, pharynx, intestine, rectum and excretory cell during embryogenesis.

It localises to the endoplasmic reticulum membrane. It functions in the pathway glycolipid biosynthesis; glycosylphosphatidylinositol-anchor biosynthesis. In terms of biological role, alpha-1,6-mannosyltransferase involved in glycosylphosphatidylinositol-anchor biosynthesis. Transfers the second mannose to the glycosylphosphatidylinositol during GPI precursor assembly. Required for maintenance of epithelial integrity during embryogenesis. This is GPI mannosyltransferase pigv-1 from Caenorhabditis elegans.